The following is a 1077-amino-acid chain: MAGVLCPTEEDRSIRAAVRMLPPQPCPDESGGYRRMSGPTLSQVQEEPAAETPQPPAPASTAEDDVRKRGYLRKQKHGHKRYFVLRSQSHLGPARLEYYDNEKKFRSGQRSGCHPKRVIPLYLCFTVSRRADAKNKHLVALYTKDEYFAMAAENEQEQDGWYQALSELINESKGACLDTEELEENYGTLRPGTVFKEVWQVNVKPRGLGQAKNLSGVYRLCLSSKAVHLVKLNSDVACVHLLLMNIRRCGHSENYFFIEVGRSSSTGAGELWMQVDDCVVAQHMHETFLDTMKALKAYSEFRPRSKSQSSGTNPISFITTRRYLGNLPPSQTGLQQRRARTETVVGTPPSAKNNSFRFRTSSEGEGTMTRPFRSVTGSLSHLNTARINLGKQEGVGRYVRAPFNSGYHSRSASLPVSHFPSATSPISVCSSNGHGSASETLTRPSSSSVCGSPSDGGFISSDEYGSSPGDLRYFRVRSNTPDSLGNTPPIQEENTLSDYMSMSAHSQPDSRDDYMEADKCFRKRTYSLTKPTNAASQQKSQTAVSLDEDSEETNKQFAYAESPKLKDSSHVEDYSNGVIDSVCNHSRRKASDDGYMPMMPSNSYDSDYLPMAPKSVSAPKQINSCPSQVDSKGYMMMFPVNGSPVKNVFGGAATKSNIEKLSNGGYMDMSYGNSIKQVHDSSLNNNSRGLSSYFSLPRSFKSLTKQTSDHSEYVPMSSPGKLLHLGAENGVDACTNGADHNVAKTELKSPSSTLDQQVKRPTKLMLGIRGSNTIPRMFDHSASAEPTSPGEYINIDFSDKASSTPCSLSAEGSPSSLGSSCDHRHSPLSDYMSVDIDVQSPKATADLCDSLTDISPYACTVVSRMQPNAEYAKLPCGTACVSKTDNRIDDYTTMTFNMAMTPPRSFAGETENGTKVDSPSSIVNRLCIGDLTSLNGGFSLPNPLPEPMAGPKVIRADSQGRRRHSSETFSSASTVTTSSSCFTESSKRHSSASFDNVWLKSDENCCEQENKMSRNCSTGFQNGLNYIALSMHDGVCEPTSPACHQHQNGSRILENGGYVSIDFTRSDCLKCPSSRKD.

Residues 1-66 (MAGVLCPTEE…APASTAEDDV (66 aa)) form a disordered region. 2 consecutive short sequence motifs (YXXM motif) follow at residues 33 to 36 (YRRM) and 147 to 150 (YFAM). In terms of domain architecture, PH spans 65–170 (DVRKRGYLRK…WYQALSELIN (106 aa)). Positions 195–299 (FKEVWQVNVK…DTMKALKAYS (105 aa)) constitute an IRS-type PTB domain. Disordered regions lie at residues 342 to 373 (ETVV…RPFR), 428 to 464 (VCSS…SDEY), and 476 to 495 (VRSN…EENT). Composition is skewed to polar residues over residues 350–364 (SAKN…SSEG) and 428–444 (VCSS…LTRP). Positions 445–457 (SSSSVCGSPSDGG) are enriched in low complexity. Residues 477–495 (RSNTPDSLGNTPPIQEENT) show a composition bias toward polar residues. Residues 499-502 (YMSM) carry the YXXM motif 3 motif. Residues 530-544 (KPTNAASQQKSQTAV) show a composition bias toward polar residues. A disordered region spans residues 530–571 (KPTNAASQQKSQTAVSLDEDSEETNKQFAYAESPKLKDSSHV). 6 consecutive short sequence motifs (YXXM motif) follow at residues 595–598 (YMPM), 608–611 (YLPM), 634–637 (YMMM), 666–669 (YMDM), 713–716 (YVPM), and 891–894 (YTTM).

Phosphorylated by INSR.

In terms of biological role, potentiates insulin signaling. This chain is Insulin receptor substrate 2-B (irs2-b), found in Xenopus laevis (African clawed frog).